The following is a 528-amino-acid chain: Phosphoenolpyruvate carboxykinase (ATP) (528 aa).

Substrate is bound by residues Arg-56, Tyr-192, and Lys-198. Residues Lys-198, His-217, and 233–241 contribute to the ATP site; that span reads GLSGTGKTT. Mn(2+) contacts are provided by Lys-198 and His-217. Residue Asp-254 participates in Mn(2+) binding. ATP contacts are provided by Glu-282, Arg-319, and Thr-444. Arg-319 provides a ligand contact to substrate.

It belongs to the phosphoenolpyruvate carboxykinase (ATP) family. Mn(2+) is required as a cofactor.

The protein localises to the cytoplasm. The enzyme catalyses oxaloacetate + ATP = phosphoenolpyruvate + ADP + CO2. The protein operates within carbohydrate biosynthesis; gluconeogenesis. Functionally, involved in the gluconeogenesis. Catalyzes the conversion of oxaloacetate (OAA) to phosphoenolpyruvate (PEP) through direct phosphoryl transfer between the nucleoside triphosphate and OAA. This is Phosphoenolpyruvate carboxykinase (ATP) from Bacillus anthracis (strain A0248).